A 299-amino-acid chain; its full sequence is GTPase Era (299 aa).

Positions Lys-4–Glu-171 constitute an Era-type G domain. Positions Gly-12–Ser-19 are G1. Gly-12 to Ser-19 is a GTP binding site. Residues Gln-38–Asn-42 are G2. The G3 stretch occupies residues Asp-59–Gly-62. GTP contacts are provided by residues Asp-59 to Ile-63 and Asn-121 to Asp-124. A G4 region spans residues Asn-121–Asp-124. The tract at residues Ile-150–Ala-152 is G5. Residues Thr-202–Lys-280 enclose the KH type-2 domain.

It belongs to the TRAFAC class TrmE-Era-EngA-EngB-Septin-like GTPase superfamily. Era GTPase family. As to quaternary structure, monomer.

The protein localises to the cytoplasm. It localises to the cell membrane. Its function is as follows. An essential GTPase that binds both GDP and GTP, with rapid nucleotide exchange. Plays a role in 16S rRNA processing and 30S ribosomal subunit biogenesis and possibly also in cell cycle regulation and energy metabolism. The sequence is that of GTPase Era from Streptococcus agalactiae serotype III (strain NEM316).